The sequence spans 1194 residues: Chitin synthase C (1194 aa).

2 disordered regions span residues 1–91 and 136–177; these read MSLP…PNYL and GAHG…RRKA. A compositionally biased stretch (basic and acidic residues) spans 12–23; the sequence is PRREETSAFREP. Positions 42–54 are enriched in basic residues; that stretch reads PRHHRHHRSHSSR. 2 stretches are compositionally biased toward basic and acidic residues: residues 55 to 69 and 76 to 85; these read HQHD…EGGI and VKPERGRMDP. Residues 150–164 are compositionally biased toward basic residues; that stretch reads TRHRSKKRKGSRKIS. Residues 221–241 traverse the membrane as a helical segment; sequence IGLISIILMIAAFVGFLTFGF. N-linked (GlcNAc...) asparagine glycosylation is found at asparagine 351 and asparagine 390. The helical transmembrane segment at 476–496 threads the bilayer; it reads YVSLIFILSIVIVKFAFALLF. N-linked (GlcNAc...) asparagine glycosylation is found at asparagine 582, asparagine 608, asparagine 885, and asparagine 1014. Helical transmembrane passes span 1039–1059, 1073–1093, and 1097–1117; these read FVIF…SFTI, IIPL…VVVT, and LVYV…NFVL.

It belongs to the chitin synthase family. Class V subfamily.

It is found in the cell membrane. It carries out the reaction [(1-&gt;4)-N-acetyl-beta-D-glucosaminyl](n) + UDP-N-acetyl-alpha-D-glucosamine = [(1-&gt;4)-N-acetyl-beta-D-glucosaminyl](n+1) + UDP + H(+). Functionally, polymerizes chitin, a structural polymer of the cell wall and septum, by transferring the sugar moiety of UDP-GlcNAc to the non-reducing end of the growing chitin polymer. Responsible for synthesis of 30-40% of the chitin in the cells. ChsA and chsD play redundant functions in conidia formation. The chitin synthesized by the chsD-encoded isozyme contributes to the rigidity of the walls of germinating conidia, of the subapical region of hyphae, and of conidiophore vesicles, but is not necessary for normal morphology of these cells. In Emericella nidulans (strain FGSC A4 / ATCC 38163 / CBS 112.46 / NRRL 194 / M139) (Aspergillus nidulans), this protein is Chitin synthase C.